A 463-amino-acid chain; its full sequence is Chromosomal replication initiator protein DnaA (463 aa).

Residues 1–83 (MNTNQIILTD…LQLFQHYNNT (83 aa)) form a domain I, interacts with DnaA modulators region. Positions 83-124 (TIKSIDIITKELPGTTQTVIELPTKTFADIGSSELNSENIFS) are domain II. Positions 125–343 (TLDVRFTFDN…GALNKVIAHS (219 aa)) are domain III, AAA+ region. The ATP site is built by G171, G173, K174, and T175. The domain IV, binds dsDNA stretch occupies residues 344–463 (NFTLKEITLE…INLLMKILQH (120 aa)).

It belongs to the DnaA family. As to quaternary structure, oligomerizes as a right-handed, spiral filament on DNA at oriC.

It is found in the cytoplasm. Plays an essential role in the initiation and regulation of chromosomal replication. ATP-DnaA binds to the origin of replication (oriC) to initiate formation of the DNA replication initiation complex once per cell cycle. Binds the DnaA box (a 9 base pair repeat at the origin) and separates the double-stranded (ds)DNA. Forms a right-handed helical filament on oriC DNA; dsDNA binds to the exterior of the filament while single-stranded (ss)DNA is stabiized in the filament's interior. The ATP-DnaA-oriC complex binds and stabilizes one strand of the AT-rich DNA unwinding element (DUE), permitting loading of DNA polymerase. After initiation quickly degrades to an ADP-DnaA complex that is not apt for DNA replication. Binds acidic phospholipids. This is Chromosomal replication initiator protein DnaA from Rickettsia akari (strain Hartford).